Reading from the N-terminus, the 439-residue chain is Adenylosuccinate synthetase (439 aa).

GTP contacts are provided by residues 14–20 (GDEGKGK) and 42–44 (GHT). Catalysis depends on Asp15, which acts as the Proton acceptor. Mg(2+)-binding residues include Asp15 and Gly42. IMP is bound by residues 15 to 18 (DEGK), 40 to 43 (NAGH), Thr130, Arg144, Gln225, Thr240, and Arg304. The active-site Proton donor is the His43. 300-306 (TTTGRRR) provides a ligand contact to substrate. GTP contacts are provided by residues Arg306, 332 to 334 (KLD), and 414 to 416 (SLG).

The protein belongs to the adenylosuccinate synthetase family. As to quaternary structure, homodimer. The cofactor is Mg(2+).

It is found in the cytoplasm. The catalysed reaction is IMP + L-aspartate + GTP = N(6)-(1,2-dicarboxyethyl)-AMP + GDP + phosphate + 2 H(+). It participates in purine metabolism; AMP biosynthesis via de novo pathway; AMP from IMP: step 1/2. Its function is as follows. Plays an important role in the de novo pathway of purine nucleotide biosynthesis. Catalyzes the first committed step in the biosynthesis of AMP from IMP. In Prochlorococcus marinus (strain MIT 9303), this protein is Adenylosuccinate synthetase.